The following is a 194-amino-acid chain: Orotate phosphoribosyltransferase (194 aa).

117-125 provides a ligand contact to 5-phospho-alpha-D-ribose 1-diphosphate; that stretch reads EDIVSTGLS. 2 residues coordinate orotate: S121 and R149.

This sequence belongs to the purine/pyrimidine phosphoribosyltransferase family. PyrE subfamily. As to quaternary structure, homodimer. Mg(2+) is required as a cofactor.

It carries out the reaction orotidine 5'-phosphate + diphosphate = orotate + 5-phospho-alpha-D-ribose 1-diphosphate. It participates in pyrimidine metabolism; UMP biosynthesis via de novo pathway; UMP from orotate: step 1/2. In terms of biological role, catalyzes the transfer of a ribosyl phosphate group from 5-phosphoribose 1-diphosphate to orotate, leading to the formation of orotidine monophosphate (OMP). In Maricaulis maris (strain MCS10) (Caulobacter maris), this protein is Orotate phosphoribosyltransferase.